A 444-amino-acid polypeptide reads, in one-letter code: Chitinase-like protein Idgf4 (444 aa).

The N-terminal stretch at 1–22 is a signal peptide; the sequence is MKLLLILLGALLAVLTIKRTSA. The 418-residue stretch at 27–444 folds into the GH18 domain; the sequence is NHLICYYDGT…ILRAIKFKFQ (418 aa). A disulfide bridge connects residues C31 and C58. Residue N226 is glycosylated (N-linked (GlcNAc...) asparagine). C345 and C428 are disulfide-bonded.

It belongs to the glycosyl hydrolase 18 family. IDGF subfamily. In terms of processing, glycosylated.

Its subcellular location is the secreted. Cooperates with insulin-like peptides to stimulate the proliferation, polarization and motility of imaginal disk cells. May act by stabilizing the binding of insulin-like peptides to its receptor through a simultaneous interaction with both molecules to form a multiprotein signaling complex. The sequence is that of Chitinase-like protein Idgf4 (Idgf4) from Glossina morsitans morsitans (Savannah tsetse fly).